Consider the following 392-residue polypeptide: Tyrosine--tRNA ligase (392 aa).

Positions 39–48 match the 'HIGH' region motif; sequence PTAPDIHIGH. A 'KMSKS' region motif is present at residues 223-227; it reads KMSKS. ATP is bound at residue lysine 226. The region spanning 331-391 is the S4 RNA-binding domain; it reads IGIAQLLKQA…GKRRFARVVL (61 aa).

Belongs to the class-I aminoacyl-tRNA synthetase family. TyrS type 2 subfamily. As to quaternary structure, homodimer.

It localises to the cytoplasm. It carries out the reaction tRNA(Tyr) + L-tyrosine + ATP = L-tyrosyl-tRNA(Tyr) + AMP + diphosphate + H(+). Functionally, catalyzes the attachment of tyrosine to tRNA(Tyr) in a two-step reaction: tyrosine is first activated by ATP to form Tyr-AMP and then transferred to the acceptor end of tRNA(Tyr). The chain is Tyrosine--tRNA ligase from Ralstonia nicotianae (strain ATCC BAA-1114 / GMI1000) (Ralstonia solanacearum).